Reading from the N-terminus, the 113-residue chain is Protein INCREASED RESISTANCE TO MYZUS PERSICAE 1 (113 aa).

Residues 56-100 (DFLKTCSLCNRSLCHHRDIYMYRGNNAFCSLECREKQIKLDEKKA) form an FLZ-type zinc finger.

The protein belongs to the FLZ family. As to quaternary structure, interacts with KIN10 and KIN11 via its FLZ-type zinc finger domain. Interacts with KINB3 via its N-terminal part. Interacts with GEBP.

The protein resides in the nucleus. It localises to the cytoplasm. May act as an adapter to facilitate the interaction of SnRK1 complex with effector proteins, conferring tissue- and stimulus-type specific differences in the SnRK1 regulation pathway. The sequence is that of Protein INCREASED RESISTANCE TO MYZUS PERSICAE 1 from Arabidopsis thaliana (Mouse-ear cress).